A 255-amino-acid chain; its full sequence is Thiazole synthase (255 aa).

Lys-96 serves as the catalytic Schiff-base intermediate with DXP. 1-deoxy-D-xylulose 5-phosphate is bound by residues Gly-157, 183-184, and 205-206; these read AG and NT.

The protein belongs to the ThiG family. As to quaternary structure, homotetramer. Forms heterodimers with either ThiH or ThiS.

It is found in the cytoplasm. It catalyses the reaction [ThiS sulfur-carrier protein]-C-terminal-Gly-aminoethanethioate + 2-iminoacetate + 1-deoxy-D-xylulose 5-phosphate = [ThiS sulfur-carrier protein]-C-terminal Gly-Gly + 2-[(2R,5Z)-2-carboxy-4-methylthiazol-5(2H)-ylidene]ethyl phosphate + 2 H2O + H(+). Its pathway is cofactor biosynthesis; thiamine diphosphate biosynthesis. In terms of biological role, catalyzes the rearrangement of 1-deoxy-D-xylulose 5-phosphate (DXP) to produce the thiazole phosphate moiety of thiamine. Sulfur is provided by the thiocarboxylate moiety of the carrier protein ThiS. In vitro, sulfur can be provided by H(2)S. The protein is Thiazole synthase of Anoxybacillus flavithermus (strain DSM 21510 / WK1).